We begin with the raw amino-acid sequence, 310 residues long: Small ribosomal subunit biogenesis GTPase RsgA (310 aa).

A CP-type G domain is found at leucine 77–phenylalanine 238. GTP is bound by residues asparagine 126–aspartate 129 and glycine 180–threonine 188. Residues cysteine 262, cysteine 267, histidine 269, and cysteine 275 each contribute to the Zn(2+) site.

It belongs to the TRAFAC class YlqF/YawG GTPase family. RsgA subfamily. In terms of assembly, monomer. Associates with 30S ribosomal subunit, binds 16S rRNA. Requires Zn(2+) as cofactor.

It localises to the cytoplasm. Functionally, one of several proteins that assist in the late maturation steps of the functional core of the 30S ribosomal subunit. Helps release RbfA from mature subunits. May play a role in the assembly of ribosomal proteins into the subunit. Circularly permuted GTPase that catalyzes slow GTP hydrolysis, GTPase activity is stimulated by the 30S ribosomal subunit. This chain is Small ribosomal subunit biogenesis GTPase RsgA, found in Bacteroides fragilis (strain ATCC 25285 / DSM 2151 / CCUG 4856 / JCM 11019 / LMG 10263 / NCTC 9343 / Onslow / VPI 2553 / EN-2).